We begin with the raw amino-acid sequence, 470 residues long: Uronate isomerase (470 aa).

This sequence belongs to the metallo-dependent hydrolases superfamily. Uronate isomerase family.

The enzyme catalyses D-glucuronate = D-fructuronate. It catalyses the reaction aldehydo-D-galacturonate = keto-D-tagaturonate. The protein operates within carbohydrate metabolism; pentose and glucuronate interconversion. This Escherichia coli O8 (strain IAI1) protein is Uronate isomerase.